Here is a 452-residue protein sequence, read N- to C-terminus: Keratin, type I cytoskeletal 42 (452 aa).

A head region spans residues 4–93; the sequence is TTSIRQFSTS…GVSDALLGGS (90 aa). 2 coiled-coil regions span residues 93–132 and 188–407; these read SEKE…WYKK and NLRM…HLAT. The interval 94 to 129 is coil 1A; the sequence is EKETMQNLNDRLATYLDRVRALEEANTDLEVKIREW. The 312-residue stretch at 94-405 folds into the IF rod domain; the sequence is EKETMQNLND…RLLEGEDAHL (312 aa). Residues 130–147 form a linker 1 region; the sequence is YKKQGPGPARDYSPYFKT. The tract at residues 148 to 239 is coil 1B; sequence IEDLRNKILA…KNHEEEMNAL (92 aa). The tract at residues 240-262 is linker 12; sequence RGQVGGDVNVEMDAAPGVDLSRI. Residues 263–401 form a coil 2 region; sequence LNEMRDQYEK…ATYRRLLEGE (139 aa). The interval 402-452 is tail; it reads DAHLATQYSSSLASQASREGTVTSRQVRTIVEEVQDGKVVSSREQVHRSTH.

This sequence belongs to the intermediate filament family. In terms of assembly, heterodimer of a type I and a type II keratin. Colocalizes with KRT8/KRT18 filament network.

The protein localises to the cytoplasm. The polypeptide is Keratin, type I cytoskeletal 42 (Rattus norvegicus (Rat)).